Consider the following 314-residue polypeptide: 4-hydroxy-3-methylbut-2-enyl diphosphate reductase (314 aa).

A [4Fe-4S] cluster-binding site is contributed by Cys12. (2E)-4-hydroxy-3-methylbut-2-enyl diphosphate-binding residues include His41 and His74. His41 and His74 together coordinate dimethylallyl diphosphate. His41 and His74 together coordinate isopentenyl diphosphate. Cys96 contacts [4Fe-4S] cluster. His124 is a binding site for (2E)-4-hydroxy-3-methylbut-2-enyl diphosphate. His124 contributes to the dimethylallyl diphosphate binding site. His124 is an isopentenyl diphosphate binding site. Glu126 (proton donor) is an active-site residue. Thr167 serves as a coordination point for (2E)-4-hydroxy-3-methylbut-2-enyl diphosphate. Cys197 serves as a coordination point for [4Fe-4S] cluster. Positions 225, 226, 227, and 269 each coordinate (2E)-4-hydroxy-3-methylbut-2-enyl diphosphate. The dimethylallyl diphosphate site is built by Ser225, Ser226, Asn227, and Ser269. Positions 225, 226, 227, and 269 each coordinate isopentenyl diphosphate.

This sequence belongs to the IspH family. [4Fe-4S] cluster is required as a cofactor.

The catalysed reaction is isopentenyl diphosphate + 2 oxidized [2Fe-2S]-[ferredoxin] + H2O = (2E)-4-hydroxy-3-methylbut-2-enyl diphosphate + 2 reduced [2Fe-2S]-[ferredoxin] + 2 H(+). It catalyses the reaction dimethylallyl diphosphate + 2 oxidized [2Fe-2S]-[ferredoxin] + H2O = (2E)-4-hydroxy-3-methylbut-2-enyl diphosphate + 2 reduced [2Fe-2S]-[ferredoxin] + 2 H(+). It participates in isoprenoid biosynthesis; dimethylallyl diphosphate biosynthesis; dimethylallyl diphosphate from (2E)-4-hydroxy-3-methylbutenyl diphosphate: step 1/1. The protein operates within isoprenoid biosynthesis; isopentenyl diphosphate biosynthesis via DXP pathway; isopentenyl diphosphate from 1-deoxy-D-xylulose 5-phosphate: step 6/6. In terms of biological role, catalyzes the conversion of 1-hydroxy-2-methyl-2-(E)-butenyl 4-diphosphate (HMBPP) into a mixture of isopentenyl diphosphate (IPP) and dimethylallyl diphosphate (DMAPP). Acts in the terminal step of the DOXP/MEP pathway for isoprenoid precursor biosynthesis. This Actinobacillus pleuropneumoniae serotype 5b (strain L20) protein is 4-hydroxy-3-methylbut-2-enyl diphosphate reductase.